The primary structure comprises 71 residues: Small ribosomal subunit protein bS18 (71 aa).

It belongs to the bacterial ribosomal protein bS18 family. Part of the 30S ribosomal subunit. Forms a tight heterodimer with protein bS6.

Binds as a heterodimer with protein bS6 to the central domain of the 16S rRNA, where it helps stabilize the platform of the 30S subunit. The polypeptide is Small ribosomal subunit protein bS18 (Thermosynechococcus vestitus (strain NIES-2133 / IAM M-273 / BP-1)).